Here is a 726-residue protein sequence, read N- to C-terminus: Catalase-peroxidase (726 aa).

The tryptophyl-tyrosyl-methioninium (Trp-Tyr) (with M-240) cross-link spans 91 to 214 (WHAAGTYRIG…LAAVQMGLIY (124 aa)). His92 (proton acceptor) is an active-site residue. Residues 214 to 240 (YVNPEGPNGNPDPVAAAIDIRETFRRM) constitute a cross-link (tryptophyl-tyrosyl-methioninium (Tyr-Met) (with W-91)). Position 255 (His255) interacts with heme b. Residues 335-362 (AHQWKPKGNAGAGTVPDPADPSKRRSPS) form a disordered region.

Belongs to the peroxidase family. Peroxidase/catalase subfamily. As to quaternary structure, homodimer or homotetramer. Heme b serves as cofactor. Formation of the three residue Trp-Tyr-Met cross-link is important for the catalase, but not the peroxidase activity of the enzyme.

It carries out the reaction H2O2 + AH2 = A + 2 H2O. The catalysed reaction is 2 H2O2 = O2 + 2 H2O. In terms of biological role, bifunctional enzyme with both catalase and broad-spectrum peroxidase activity. This is Catalase-peroxidase from Cupriavidus metallidurans (strain ATCC 43123 / DSM 2839 / NBRC 102507 / CH34) (Ralstonia metallidurans).